We begin with the raw amino-acid sequence, 75 residues long: Beta-defensin 30 (75 aa).

Residues 1-22 form the signal peptide; it reads MGSLQLTLVLFVLLSYVPPVRS. Cystine bridges form between C35–C62, C42–C56, and C46–C63.

The protein belongs to the beta-defensin family.

Its subcellular location is the secreted. Its function is as follows. Has antibacterial activity. In Mus musculus (Mouse), this protein is Beta-defensin 30 (Defb30).